Reading from the N-terminus, the 631-residue chain is Shootin-1 (631 aa).

Met1 is modified (N-acetylmethionine). Phosphoserine is present on residues Ser3 and Ser4. Residues 7 to 353 adopt a coiled-coil conformation; that stretch reads EKQLQLITSL…RVNQSENSVP (347 aa). Residue Ser101 is modified to Phosphoserine; by PAK1. Ser249 bears the Phosphoserine mark. Disordered regions lie at residues 343 to 404 and 417 to 508; these read KRVN…EVTD and IKKG…KSMP. Residues 352–369 are compositionally biased toward pro residues; sequence VPPPPPPPPPLPPPPPNP. A Phosphoserine modification is found at Ser375. A compositionally biased stretch (polar residues) spans 456-465; it reads LNKSTSSRSL. Ser473 is subject to Phosphoserine. Thr487 is modified (phosphothreonine). The span at 490–505 shows a compositional bias: polar residues; the sequence is ADSSSPTGILATSESK. Ser494 is subject to Phosphoserine. Thr496 carries the post-translational modification Phosphothreonine. Ser506 and Ser515 each carry phosphoserine. Residues 530–631 are disordered; that stretch reads FNNPCPLTPE…KTGETDSSNC (102 aa). Thr537 is subject to Phosphothreonine. Residues 590–602 show a composition bias toward basic and acidic residues; it reads PQTKDQAAEKDPT.

This sequence belongs to the shootin family. As to quaternary structure, interacts with L1CAM; this interaction occurs at axonal growth cones. Interacts with actin filament retrograde flow; this interaction is enhanced in a netrin-1- and PAK1-dependent manner and promotes F-actin-substrate coupling and concomitant formation of traction forces at axonal growth cones. Interacts with RUFY3. Interacts with PFN2. Interacts (via N-terminus) with KIF20B; this interaction is direct and promotes the association of SHTN1 to microtubules in primary neurons. Associates with microtubule. Phosphorylated on Ser-101 and Ser-249 by PAK1 through a CDC42- and RAC1-dependent signaling pathway, which enhances its association with F-actin retrograde flow in filopodia and lamellipodia of axonal growth cones. Phosphorylation on Ser-101 and Ser-249 is increased by netrin-1. In terms of tissue distribution, expressed in hippocampal neurons.

The protein resides in the perikaryon. It localises to the cell projection. The protein localises to the axon. It is found in the growth cone. Its subcellular location is the cytoplasm. The protein resides in the cytoskeleton. It localises to the filopodium. The protein localises to the lamellipodium. Functionally, involved in the generation of internal asymmetric signals required for neuronal polarization and neurite outgrowth. Mediates netrin-1-induced F-actin-substrate coupling or 'clutch engagement' within the axon growth cone through activation of CDC42, RAC1 and PAK1-dependent signaling pathway, thereby converting the F-actin retrograde flow into traction forces, concomitantly with filopodium extension and axon outgrowth. Plays a role in cytoskeletal organization by regulating the subcellular localization of phosphoinositide 3-kinase (PI3K) activity at the axonal growth cone. Also plays a role in regenerative neurite outgrowth. In the developing cortex, cooperates with KIF20B to promote both the transition from the multipolar to the bipolar stage and the radial migration of cortical neurons from the ventricular zone toward the superficial layer of the neocortex. Involved in the accumulation of phosphatidylinositol 3,4,5-trisphosphate (PIP3) in the growth cone of primary hippocampal neurons. The polypeptide is Shootin-1 (Mus musculus (Mouse)).